Here is a 262-residue protein sequence, read N- to C-terminus: Beta-phosphoglucomutase (262 aa).

D29 (nucleophile) is an active-site residue. Mg(2+) contacts are provided by D29 and D31. D29 carries the 4-aspartylphosphate modification. D31 (proton donor/acceptor) is an active-site residue. Residues D31, G79, R82, S157, and N159 each coordinate beta-D-glucose 6-phosphate. D215 contributes to the Mg(2+) binding site.

The protein belongs to the HAD-like hydrolase superfamily. CbbY/CbbZ/Gph/YieH family. As to quaternary structure, monomer. It depends on Mg(2+) as a cofactor. Autophosphorylated.

The catalysed reaction is beta-D-glucose 1-phosphate = beta-D-glucose 6-phosphate. In terms of biological role, catalyzes the interconversion of D-glucose 1-phosphate (G1P) and D-glucose 6-phosphate (G6P), forming beta-D-glucose 1,6-(bis)phosphate (beta-G16P) as an intermediate. The protein is Beta-phosphoglucomutase of Mycobacterium bovis (strain ATCC BAA-935 / AF2122/97).